Reading from the N-terminus, the 585-residue chain is YTH domain-containing family protein 3 (585 aa).

Disordered regions lie at residues 1–52, 243–277, and 304–351; these read MSAT…YPPM, RKPAKPQPKLKPKGNVGIGGSAVPPPPIKHNMNIG, and PQPL…QQLQ. Ser2 carries the N-acetylserine modification. The segment covering 15–24 has biased composition (polar residues); the sequence is NKVSVQNGSI. At Ser23 the chain carries Phosphoserine. The span at 244-254 shows a compositional bias: basic residues; sequence KPAKPQPKLKP. A compositionally biased stretch (low complexity) spans 329-351; it reads QQQQGPQPQAQPHQVQPQQQQLQ. One can recognise a YTH domain in the interval 416 to 550; sequence GRVFIIKSYS…EKAKQVLKII (135 aa). RNA-binding positions include 422 to 424, Asp428, 438 to 439, Asn468, Trp492, and Trp497; these read KSY and WC.

Belongs to the YTHDF family. YTHDF3 subfamily. In terms of assembly, interacts with CNOT1; promoting recruitment of the CCR4-NOT complex. Interacts with YTHDF1. Interacts with YTHDF2. Interacts with PAN3. Post-translationally, (Microbial infection) Proteolytically cleaved by HIV-1 protease when incorporated into HIV-1 particles in a nucleocapsid-dependent-manner. Cleavage by HIV-1 protease probably ensures optimal infectivity of the mature virion.

The protein resides in the cytoplasm. It is found in the cytosol. The protein localises to the P-body. Its subcellular location is the stress granule. Specifically recognizes and binds N6-methyladenosine (m6A)-containing RNAs, and regulates their stability. M6A is a modification present at internal sites of mRNAs and some non-coding RNAs and plays a role in mRNA stability and processing. Acts as a regulator of mRNA stability by promoting degradation of m6A-containing mRNAs via interaction with the CCR4-NOT complex or PAN3. The YTHDF paralogs (YTHDF1, YTHDF2 and YTHDF3) share m6A-containing mRNAs targets and act redundantly to mediate mRNA degradation and cellular differentiation. Acts as a negative regulator of type I interferon response by down-regulating interferon-stimulated genes (ISGs) expression: acts by binding to FOXO3 mRNAs. Binds to FOXO3 mRNAs independently of METTL3-mediated m6A modification. Can also act as a regulator of mRNA stability in cooperation with YTHDF2 by binding to m6A-containing mRNA and promoting their degradation. Recognizes and binds m6A-containing circular RNAs (circRNAs); circRNAs are generated through back-splicing of pre-mRNAs, a non-canonical splicing process promoted by dsRNA structures across circularizing exons. Promotes formation of phase-separated membraneless compartments, such as P-bodies or stress granules, by undergoing liquid-liquid phase separation upon binding to mRNAs containing multiple m6A-modified residues: polymethylated mRNAs act as a multivalent scaffold for the binding of YTHDF proteins, juxtaposing their disordered regions and thereby leading to phase separation. The resulting mRNA-YTHDF complexes then partition into different endogenous phase-separated membraneless compartments, such as P-bodies, stress granules or neuronal RNA granules. May also recognize and bind N1-methyladenosine (m1A)-containing mRNAs: inhibits trophoblast invasion by binding to m1A-methylated transcripts of IGF1R, promoting their degradation. Functionally, has some antiviral activity against HIV-1 virus: incorporated into HIV-1 particles in a nucleocapsid-dependent manner and reduces viral infectivity in the next cycle of infection. May interfere with this early step of the viral life cycle by binding to N6-methyladenosine (m6A) modified sites on the HIV-1 RNA genome. The sequence is that of YTH domain-containing family protein 3 from Homo sapiens (Human).